We begin with the raw amino-acid sequence, 145 residues long: Brain and acute leukemia cytoplasmic protein (145 aa).

Gly2 carries the N-myristoyl glycine lipid modification. Cys3 carries the S-palmitoyl cysteine lipid modification. Residues 3–35 (CGGSRADAIEPRYYESWTRETESTWLTYTDSDA) are interaction with CAMK2A. The tract at residues 36–113 (LPSAAATDSG…GLWTTEAKRD (78 aa)) is disordered. A compositionally biased stretch (polar residues) spans 83 to 106 (CGTQCPNSQSLSSGPLTQKQNGLW).

In terms of assembly, interacts with CAMK2A. Palmitoylation and myristoylation target the protein to the lipid rafts. In terms of tissue distribution, predominantly expressed in the brain (at protein level). Within the brain, found in most of forebrain structures, including the cerebral cortex, hippocampal formation, olfactory bulb, anterior olfactory nuclei, piriform cortex, tenia tecta and amygdaloid nuclei. Not detected in glial cells.

Its subcellular location is the cytoplasm. The protein resides in the synapse. It localises to the synaptosome. It is found in the membrane raft. The protein localises to the postsynaptic density. May play a synaptic role at the postsynaptic lipid rafts possibly through interaction with CAMK2A. This is Brain and acute leukemia cytoplasmic protein (Baalc) from Rattus norvegicus (Rat).